The sequence spans 154 residues: Keratin-associated protein 9-4 (154 aa).

15 repeat units span residues 8–12, 13–17, 18–22, 37–41, 42–46, 51–55, 56–60, 61–65, 70–74, 75–79, 80–84, 85–89, 129–133, 134–138, and 148–152. The 15 X 5 AA repeats of C-C-[RQVGE]-[SPTN]-[TASPF] stretch occupies residues 8–152; that stretch reads CCQPTCCRTT…TCVSSCCQPF (145 aa).

Belongs to the KRTAP type 9 family. As to quaternary structure, interacts with hair keratins.

Functionally, in the hair cortex, hair keratin intermediate filaments are embedded in an interfilamentous matrix, consisting of hair keratin-associated proteins (KRTAP), which are essential for the formation of a rigid and resistant hair shaft through their extensive disulfide bond cross-linking with abundant cysteine residues of hair keratins. The matrix proteins include the high-sulfur and high-glycine-tyrosine keratins. The protein is Keratin-associated protein 9-4 (KRTAP9-4) of Homo sapiens (Human).